The primary structure comprises 172 residues: Adenine phosphoribosyltransferase (172 aa).

It belongs to the purine/pyrimidine phosphoribosyltransferase family. In terms of assembly, homodimer.

It localises to the cytoplasm. It carries out the reaction AMP + diphosphate = 5-phospho-alpha-D-ribose 1-diphosphate + adenine. The protein operates within purine metabolism; AMP biosynthesis via salvage pathway; AMP from adenine: step 1/1. Catalyzes a salvage reaction resulting in the formation of AMP, that is energically less costly than de novo synthesis. The sequence is that of Adenine phosphoribosyltransferase from Prochlorococcus marinus (strain SARG / CCMP1375 / SS120).